A 149-amino-acid polypeptide reads, in one-letter code: Calmodulin (149 aa).

At Ala-2 the chain carries N-acetylalanine. 4 consecutive EF-hand domains span residues 8–43 (EQIA…LGQN), 44–79 (PTEA…KMKD), 81–116 (DTEE…LGEK), and 117–149 (LTDE…MMAK). Ca(2+) contacts are provided by Asp-21, Asp-23, Asp-25, Thr-27, Glu-32, Asp-57, Asp-59, Asn-61, Thr-63, Glu-68, Asp-94, Asp-96, Asn-98, and Glu-105. The residue at position 116 (Lys-116) is an N6,N6,N6-trimethyllysine. The Ca(2+) site is built by Asp-130, Asp-132, Asp-134, His-136, and Glu-141.

The protein belongs to the calmodulin family.

Functionally, calmodulin mediates the control of a large number of enzymes, ion channels and other proteins by Ca(2+). Among the enzymes to be stimulated by the calmodulin-Ca(2+) complex are a number of protein kinases and phosphatases. The sequence is that of Calmodulin from Tetrahymena pyriformis.